Here is a 303-residue protein sequence, read N- to C-terminus: Sulfate adenylyltransferase subunit 2 (303 aa).

Belongs to the PAPS reductase family. CysD subfamily. As to quaternary structure, heterodimer composed of CysD, the smaller subunit, and CysN.

It catalyses the reaction sulfate + ATP + H(+) = adenosine 5'-phosphosulfate + diphosphate. The protein operates within sulfur metabolism; hydrogen sulfide biosynthesis; sulfite from sulfate: step 1/3. In terms of biological role, with CysN forms the ATP sulfurylase (ATPS) that catalyzes the adenylation of sulfate producing adenosine 5'-phosphosulfate (APS) and diphosphate, the first enzymatic step in sulfur assimilation pathway. APS synthesis involves the formation of a high-energy phosphoric-sulfuric acid anhydride bond driven by GTP hydrolysis by CysN coupled to ATP hydrolysis by CysD. The polypeptide is Sulfate adenylyltransferase subunit 2 (Phocaeicola vulgatus (strain ATCC 8482 / DSM 1447 / JCM 5826 / CCUG 4940 / NBRC 14291 / NCTC 11154) (Bacteroides vulgatus)).